The primary structure comprises 246 residues: Probable transcriptional regulatory protein TM1040_1893 (246 aa).

The interval 1–21 is disordered; the sequence is MAGHSKWANIQHRKGRQDAAR.

Belongs to the TACO1 family.

It localises to the cytoplasm. The protein is Probable transcriptional regulatory protein TM1040_1893 of Ruegeria sp. (strain TM1040) (Silicibacter sp.).